The primary structure comprises 271 residues: Bifunctional protein FolD (271 aa).

NADP(+) contacts are provided by residues 154-156 (GRS), threonine 181, and isoleucine 222.

It belongs to the tetrahydrofolate dehydrogenase/cyclohydrolase family. In terms of assembly, homodimer.

The enzyme catalyses (6R)-5,10-methylene-5,6,7,8-tetrahydrofolate + NADP(+) = (6R)-5,10-methenyltetrahydrofolate + NADPH. The catalysed reaction is (6R)-5,10-methenyltetrahydrofolate + H2O = (6R)-10-formyltetrahydrofolate + H(+). The protein operates within one-carbon metabolism; tetrahydrofolate interconversion. Functionally, catalyzes the oxidation of 5,10-methylenetetrahydrofolate to 5,10-methenyltetrahydrofolate and then the hydrolysis of 5,10-methenyltetrahydrofolate to 10-formyltetrahydrofolate. This Thermosipho melanesiensis (strain DSM 12029 / CIP 104789 / BI429) protein is Bifunctional protein FolD.